Here is a 609-residue protein sequence, read N- to C-terminus: CTTNBP2 N-terminal-like protein (609 aa).

Polar residues predominate over residues 1–10; it reads MEQNSNSSVA. The tract at residues 1–29 is disordered; it reads MEQNSNSSVADTFAEAPATDADYGTENCS. Coiled coils occupy residues 182-264 and 303-370; these read RMVN…QKQI and IAEG…QQLG. A disordered region spans residues 556–584; that stretch reads PPAGARGAPPPIPTKPIVPPKREPSLSRL. The segment covering 563–574 has biased composition (pro residues); sequence APPPIPTKPIVP. S586 is subject to Phosphoserine.

The protein resides in the cell projection. It localises to the lamellipodium. Its subcellular location is the cytoplasm. The protein localises to the cytoskeleton. It is found in the stress fiber. Its function is as follows. Regulates lamellipodial actin dynamics in a Cortactin-dependent manner and is therefore likely involved in controlling actin branch density, actin-retrograde flow rates and lamellipodial protrusion. Functions by slowing the dissociation of Cortactin from Arp2/3 nucleated branches thereby increasing branch nucleation and junction stability. Associates with core striatin-interacting phosphatase and kinase (STRIPAK) complex to form CTTNBP2NL-STRIPAK complexes. STRIPAK complexes have critical roles in protein (de)phosphorylation and are regulators of multiple signaling pathways including Hippo, MAPK, nuclear receptor and cytoskeleton remodeling. Different types of STRIPAK complexes are involved in a variety of biological processes such as cell growth, differentiation, apoptosis, metabolism and immune regulation. The protein is CTTNBP2 N-terminal-like protein of Drosophila melanogaster (Fruit fly).